Here is a 319-residue protein sequence, read N- to C-terminus: Ribonuclease Z (319 aa).

His-62, His-64, Asp-66, His-67, His-145, Asp-215, and His-273 together coordinate Zn(2+). The active-site Proton acceptor is the Asp-66.

Belongs to the RNase Z family. Homodimer. It depends on Zn(2+) as a cofactor.

The enzyme catalyses Endonucleolytic cleavage of RNA, removing extra 3' nucleotides from tRNA precursor, generating 3' termini of tRNAs. A 3'-hydroxy group is left at the tRNA terminus and a 5'-phosphoryl group is left at the trailer molecule.. Its function is as follows. Zinc phosphodiesterase, which displays some tRNA 3'-processing endonuclease activity. Probably involved in tRNA maturation, by removing a 3'-trailer from precursor tRNA. In Borrelia duttonii (strain Ly), this protein is Ribonuclease Z.